A 209-amino-acid chain; its full sequence is MTLASQIATQLLDIKAVYLKPEDPFTWASGIKSPIYTDNRVTLSYPKTRDLIENGFVETIKAHFPEVEVIAGTATAGIPHGAIIADKMTLPFAYIRSKPKDHGAGNQIEGRVLKGQKMVIIEDLISTGGSVLDAAAAASREGADVLGVVAIFTYELPKASQNFKEAGIKLITLSNYTELIAVAKLQGYITNDGLHLLKKFKEDQVNWQQ.

Residues Arg96, Lys100, His102, and 122 to 130 each bind 5-phospho-alpha-D-ribose 1-diphosphate; that span reads EDLISTGGS. Ser126 serves as a coordination point for orotate.

The protein belongs to the purine/pyrimidine phosphoribosyltransferase family. PyrE subfamily. As to quaternary structure, homodimer. Requires Mg(2+) as cofactor.

It catalyses the reaction orotidine 5'-phosphate + diphosphate = orotate + 5-phospho-alpha-D-ribose 1-diphosphate. It functions in the pathway pyrimidine metabolism; UMP biosynthesis via de novo pathway; UMP from orotate: step 1/2. Catalyzes the transfer of a ribosyl phosphate group from 5-phosphoribose 1-diphosphate to orotate, leading to the formation of orotidine monophosphate (OMP). The sequence is that of Orotate phosphoribosyltransferase from Streptococcus pyogenes serotype M1.